A 534-amino-acid polypeptide reads, in one-letter code: NAD(P)H-quinone oxidoreductase chain 4 2 (534 aa).

Helical transmembrane passes span 9-29 (FPWLTTVIAYPVLAALFIPLI), 51-71 (WFALFIAVTDLLILLAGFYVG), 106-126 (LILLTAFITTLAILAAWPVTL), 130-150 (LFYFLMLAMYGGQIGVFAVQD), 152-172 (LLFFLMWELELIPVYLLLSIW), 184-204 (FILYTALSSLFILVAGLAMAF), 227-247 (LLMYGAFLIAYGVKLPIFPLH), 258-278 (TAPVHMLLAGILLKMGGYALM), 290-310 (LYFAPVLIVLGVVNIIFAALT), 326-346 (ISHMGFVLIGIGSLTEIGMSG), 347-367 (AMLQMISHGLIGASLFFLVGA), 399-419 (LASLALPGMSGFVAEIMVFIG), 432-452 (LVVVFLAAVGVILTPIYLLSM), and 479-499 (VFIIACLLIPIIGIGLYPKLV).

It belongs to the complex I subunit 4 family.

Its subcellular location is the cellular thylakoid membrane. It catalyses the reaction a plastoquinone + NADH + (n+1) H(+)(in) = a plastoquinol + NAD(+) + n H(+)(out). The catalysed reaction is a plastoquinone + NADPH + (n+1) H(+)(in) = a plastoquinol + NADP(+) + n H(+)(out). Its function is as follows. NDH-1 shuttles electrons from NAD(P)H, via FMN and iron-sulfur (Fe-S) centers, to quinones in the respiratory chain. The immediate electron acceptor for the enzyme in this species is believed to be plastoquinone. Couples the redox reaction to proton translocation (for every two electrons transferred, four hydrogen ions are translocated across the cytoplasmic membrane), and thus conserves the redox energy in a proton gradient. The chain is NAD(P)H-quinone oxidoreductase chain 4 2 from Synechococcus sp. (strain JA-2-3B'a(2-13)) (Cyanobacteria bacterium Yellowstone B-Prime).